Here is a 563-residue protein sequence, read N- to C-terminus: MMRSDEIKKGYNRAPHRSLLRATGLKDEDFDKPFIGVANSFIELIPGHYFLNKVAEVIKNEIRANGCVPFEFNTIGVDDGIAMGHDGMLYSLPSREIIANSIETVMNAHKLDAMIAIPNCDKIVPGMIMGALRVDVPTVFVSGGPMAAGHMDDGTPIDLATVFEGVGEYEAGEITEETLAEMECNACPSGGSCSGMFTANSMNTLMEAMGIALPGNGTILALTPERTELYKKAARRICEIAKSEAAEREKFRMRNILNENAVRNAFAVDMAMGGSSNTVLHMLAIAKEAEVDFNLEDINMISKRVSHIAKISPSLTTVHMEDINTAGGVSSVMHEMHKRGDDILIDNPTITGESLYERIKDARILDTNIIHTIDNPFSEVGGLAILYGNLAEQGAVIKTAGITGDRAFTGTAVCFDSQDEAIEGILSGKVKAGNVVVIRYEGPKGGPGMQEMLSPTSLIMGMGLGDKVALITDGRFSGATRGASIGHVSPEAAEGGLIGLLEDGDEIHLDVDNYILEAKLTFEEIAERKDKFKPVVKPLKSKWLRQYRALVTNASNGAVLEAE.

Aspartate 79 is a Mg(2+) binding site. Cysteine 120 is a binding site for [2Fe-2S] cluster. The Mg(2+) site is built by aspartate 121 and lysine 122. At lysine 122 the chain carries N6-carboxylysine. Cysteine 193 lines the [2Fe-2S] cluster pocket. A Mg(2+)-binding site is contributed by glutamate 451. Serine 477 (proton acceptor) is an active-site residue.

Belongs to the IlvD/Edd family. Homodimer. [2Fe-2S] cluster serves as cofactor. The cofactor is Mg(2+).

It carries out the reaction (2R)-2,3-dihydroxy-3-methylbutanoate = 3-methyl-2-oxobutanoate + H2O. The catalysed reaction is (2R,3R)-2,3-dihydroxy-3-methylpentanoate = (S)-3-methyl-2-oxopentanoate + H2O. It functions in the pathway amino-acid biosynthesis; L-isoleucine biosynthesis; L-isoleucine from 2-oxobutanoate: step 3/4. Its pathway is amino-acid biosynthesis; L-valine biosynthesis; L-valine from pyruvate: step 3/4. Functions in the biosynthesis of branched-chain amino acids. Catalyzes the dehydration of (2R,3R)-2,3-dihydroxy-3-methylpentanoate (2,3-dihydroxy-3-methylvalerate) into 2-oxo-3-methylpentanoate (2-oxo-3-methylvalerate) and of (2R)-2,3-dihydroxy-3-methylbutanoate (2,3-dihydroxyisovalerate) into 2-oxo-3-methylbutanoate (2-oxoisovalerate), the penultimate precursor to L-isoleucine and L-valine, respectively. The sequence is that of Dihydroxy-acid dehydratase from Sulfurovum sp. (strain NBC37-1).